Reading from the N-terminus, the 887-residue chain is DNA mismatch repair protein MutS (887 aa).

Position 621–628 (621–628 (GPNMGGKS)) interacts with ATP. A disordered region spans residues 828 to 853 (AEPEPNKPAAAAKTKPASPQPDLFAS). Over residues 834 to 848 (KPAAAAKTKPASPQP) the composition is skewed to low complexity.

This sequence belongs to the DNA mismatch repair MutS family.

This protein is involved in the repair of mismatches in DNA. It is possible that it carries out the mismatch recognition step. This protein has a weak ATPase activity. The chain is DNA mismatch repair protein MutS from Saccharophagus degradans (strain 2-40 / ATCC 43961 / DSM 17024).